Reading from the N-terminus, the 415-residue chain is Serine hydroxymethyltransferase (415 aa).

(6S)-5,6,7,8-tetrahydrofolate-binding positions include L119 and 123 to 125 (GHL). K228 is subject to N6-(pyridoxal phosphate)lysine. Residue 353–355 (SPF) coordinates (6S)-5,6,7,8-tetrahydrofolate.

It belongs to the SHMT family. As to quaternary structure, homodimer. Requires pyridoxal 5'-phosphate as cofactor.

It is found in the cytoplasm. It carries out the reaction (6R)-5,10-methylene-5,6,7,8-tetrahydrofolate + glycine + H2O = (6S)-5,6,7,8-tetrahydrofolate + L-serine. The protein operates within one-carbon metabolism; tetrahydrofolate interconversion. Its pathway is amino-acid biosynthesis; glycine biosynthesis; glycine from L-serine: step 1/1. In terms of biological role, catalyzes the reversible interconversion of serine and glycine with tetrahydrofolate (THF) serving as the one-carbon carrier. Also exhibits THF-independent aldolase activity toward beta-hydroxyamino acids, producing glycine and aldehydes, via a retro-aldol mechanism. This is Serine hydroxymethyltransferase from Halorubrum lacusprofundi (strain ATCC 49239 / DSM 5036 / JCM 8891 / ACAM 34).